The following is a 179-amino-acid chain: Inosine/xanthosine triphosphatase (179 aa).

Substrate is bound by residues 8–13 (TTNPAK) and 68–69 (EA). A Mg(2+)-binding site is contributed by Glu68.

It belongs to the YjjX NTPase family. Homodimer. Mg(2+) is required as a cofactor. Mn(2+) serves as cofactor.

The enzyme catalyses XTP + H2O = XDP + phosphate + H(+). It carries out the reaction ITP + H2O = IDP + phosphate + H(+). Functionally, phosphatase that hydrolyzes non-canonical purine nucleotides such as XTP and ITP to their respective diphosphate derivatives. Probably excludes non-canonical purines from DNA/RNA precursor pool, thus preventing their incorporation into DNA/RNA and avoiding chromosomal lesions. The sequence is that of Inosine/xanthosine triphosphatase from Serratia proteamaculans (strain 568).